We begin with the raw amino-acid sequence, 463 residues long: Fumarate hydratase class II (463 aa).

Residues 98–100 (SGT), 129–132 (HPND), 139–141 (SSN), and threonine 187 contribute to the substrate site. Catalysis depends on histidine 188, which acts as the Proton donor/acceptor. The active site involves serine 318. Substrate contacts are provided by residues serine 319 and 324 to 326 (KVN).

Belongs to the class-II fumarase/aspartase family. Fumarase subfamily. As to quaternary structure, homotetramer.

The protein resides in the cytoplasm. It carries out the reaction (S)-malate = fumarate + H2O. It functions in the pathway carbohydrate metabolism; tricarboxylic acid cycle; (S)-malate from fumarate: step 1/1. Its function is as follows. Involved in the TCA cycle. Catalyzes the stereospecific interconversion of fumarate to L-malate. This Rhizobium meliloti (strain 1021) (Ensifer meliloti) protein is Fumarate hydratase class II.